The primary structure comprises 490 residues: Transmembrane protein 185-like (490 aa).

Positions 1–31 (MIENENTSLLSTSSSSTSSSPNNANSPSSLN) are enriched in low complexity. Disordered regions lie at residues 1-151 (MIEN…SKYK) and 455-490 (NMINNQDSSESESDDETEVSFKDREDEESEKLISNL). The span at 47 to 59 (TSGNNSPSAQITK) shows a compositional bias: polar residues. Composition is skewed to low complexity over residues 66–80 (SNNSSRNSSRPNSRS) and 89–108 (NNNNNNNNNNNNNNNNNNIN). Over residues 109-125 (KHNSIVYNKSNNKLNSI) the composition is skewed to polar residues. Over residues 133 to 145 (QGGGGGNGNGNGN) the composition is skewed to gly residues. Over residues 463-472 (SESESDDETE) the composition is skewed to acidic residues.

This sequence belongs to the TMEM185 family.

The sequence is that of Transmembrane protein 185-like from Dictyostelium discoideum (Social amoeba).